The primary structure comprises 167 residues: NAD(P)H-quinone oxidoreductase subunit I, chloroplastic (167 aa).

4Fe-4S ferredoxin-type domains follow at residues 55–84 (GRIH…VDWK) and 95–124 (LNYS…MTEE). Positions 64, 67, 70, 74, 104, 107, 110, and 114 each coordinate [4Fe-4S] cluster.

The protein belongs to the complex I 23 kDa subunit family. As to quaternary structure, NDH is composed of at least 16 different subunits, 5 of which are encoded in the nucleus. It depends on [4Fe-4S] cluster as a cofactor.

The protein resides in the plastid. Its subcellular location is the chloroplast thylakoid membrane. It catalyses the reaction a plastoquinone + NADH + (n+1) H(+)(in) = a plastoquinol + NAD(+) + n H(+)(out). The enzyme catalyses a plastoquinone + NADPH + (n+1) H(+)(in) = a plastoquinol + NADP(+) + n H(+)(out). In terms of biological role, NDH shuttles electrons from NAD(P)H:plastoquinone, via FMN and iron-sulfur (Fe-S) centers, to quinones in the photosynthetic chain and possibly in a chloroplast respiratory chain. The immediate electron acceptor for the enzyme in this species is believed to be plastoquinone. Couples the redox reaction to proton translocation, and thus conserves the redox energy in a proton gradient. This is NAD(P)H-quinone oxidoreductase subunit I, chloroplastic from Atropa belladonna (Belladonna).